Reading from the N-terminus, the 273-residue chain is Dermonecrotic toxin LdSicTox-alphaIB3avi (273 aa).

H5 is an active-site residue. 2 residues coordinate Mg(2+): E25 and D27. The active-site Nucleophile is the H41. 2 disulfides stabilise this stretch: C45/C51 and C47/C190. D85 is a Mg(2+) binding site.

It belongs to the arthropod phospholipase D family. Class II subfamily. The cofactor is Mg(2+). As to expression, expressed by the venom gland.

It localises to the secreted. The enzyme catalyses an N-(acyl)-sphingosylphosphocholine = an N-(acyl)-sphingosyl-1,3-cyclic phosphate + choline. It carries out the reaction an N-(acyl)-sphingosylphosphoethanolamine = an N-(acyl)-sphingosyl-1,3-cyclic phosphate + ethanolamine. It catalyses the reaction a 1-acyl-sn-glycero-3-phosphocholine = a 1-acyl-sn-glycero-2,3-cyclic phosphate + choline. The catalysed reaction is a 1-acyl-sn-glycero-3-phosphoethanolamine = a 1-acyl-sn-glycero-2,3-cyclic phosphate + ethanolamine. In terms of biological role, dermonecrotic toxins cleave the phosphodiester linkage between the phosphate and headgroup of certain phospholipids (sphingolipid and lysolipid substrates), forming an alcohol (often choline) and a cyclic phosphate. This toxin acts on sphingomyelin (SM). It may also act on ceramide phosphoethanolamine (CPE), lysophosphatidylcholine (LPC) and lysophosphatidylethanolamine (LPE), but not on lysophosphatidylserine (LPS), and lysophosphatidylglycerol (LPG). It acts by transphosphatidylation, releasing exclusively cyclic phosphate products as second products. Induces dermonecrosis, hemolysis, increased vascular permeability, edema, inflammatory response, and platelet aggregation. The sequence is that of Dermonecrotic toxin LdSicTox-alphaIB3avi from Loxosceles deserta (Desert recluse spider).